The sequence spans 231 residues: MGQKVNPKGLRIGIIRDWEGKWYADKRNYAALLHEDIKIRKFIKEKLFAAGISRIQIERAANRVKVSIHTAKPGIVIGRGGAEVENLRKQLENLTGKQVSVNIVEIKVPELDAQLVAENVAAQLEKRIAFRRAMKQVVSRSMKMGAKGIKVACGGRLAGAEIARTEWYSEGKVPLHTLRADIDYGFAEANTTYGKIGVKVWIYRGEVLPEAKTPAKTAARGGKEAPGEGGE.

A KH type-2 domain is found at 39–107 (IRKFIKEKLF…QVSVNIVEIK (69 aa)).

Belongs to the universal ribosomal protein uS3 family. Part of the 30S ribosomal subunit. Forms a tight complex with proteins S10 and S14.

Binds the lower part of the 30S subunit head. Binds mRNA in the 70S ribosome, positioning it for translation. This Pelotomaculum thermopropionicum (strain DSM 13744 / JCM 10971 / SI) protein is Small ribosomal subunit protein uS3.